The primary structure comprises 141 residues: Hemoglobin subunit alpha-2 (141 aa).

The Globin domain occupies 1 to 141; that stretch reads VLSSQDKANV…VKHVLTSKYR (141 aa). An O2-binding site is contributed by histidine 58. Histidine 87 lines the heme b pocket.

The protein belongs to the globin family. Minor hemoglobin is a heterotetramer of two alpha-2 chains and two beta-2 chains. In terms of tissue distribution, red blood cells.

Its function is as follows. Involved in oxygen transport from the lung to the various peripheral tissues. In Triturus cristatus (Great crested newt), this protein is Hemoglobin subunit alpha-2.